The chain runs to 211 residues: Redox-sensing transcriptional repressor Rex (211 aa).

The segment at residues 16–55 (LYYRYLLILNEEGKDKVSSTELSEAVQVDSASIRRDFSYF) is a DNA-binding region (H-T-H motif). 90-95 (GVGNLG) contacts NAD(+).

This sequence belongs to the transcriptional regulatory Rex family. Homodimer.

The protein localises to the cytoplasm. Modulates transcription in response to changes in cellular NADH/NAD(+) redox state. This is Redox-sensing transcriptional repressor Rex from Lactobacillus acidophilus (strain ATCC 700396 / NCK56 / N2 / NCFM).